A 153-amino-acid chain; its full sequence is Agglutinin (153 aa).

Residues 22-25 (NAWE) and N46 contribute to the beta-D-galactosyl-(1-&gt;3)-N-acetyl-D-galactosamine site. In terms of domain architecture, Ricin B-type lectin spans 58-153 (GDSAEYLIIN…DNQKWYFDAK (96 aa)).

In terms of assembly, homodimer.

In terms of biological role, lectin that primarily recognizes glycans with a non-reducing terminal N-acetylgalactosamine (GalNAc), with a preference for the alpha- over the beta-anomer. Can also bind non-reducing terminal galactose (Gal) residues but with a lower affinity. Strongly interacts with glycolipid type glycans with terminal non-reducing Gal or GalNAc but fails to bind sialylated or fucosylated forms of the same glycans. Strongly interacts with galactosylated N-glycans, displaying highest affinity for alpha-1-3 branched mono-antennary N-glycans but also binding to multi-antennary glycans. This is Agglutinin from Sclerotinia sclerotiorum (strain ATCC 18683 / 1980 / Ss-1) (White mold).